The chain runs to 217 residues: Protein MODIFYING WALL LIGNIN-2 (217 aa).

An N-terminal signal peptide occupies residues 1–23 (MHNLFLYSVVFSLGLVSFITCFA). The Cytoplasmic portion of the chain corresponds to 24–51 (AEFKRTQKEDIRWDTERNCYVPGSHAFG). A helical membrane pass occupies residues 52–72 (LGSAAVLCFCLAQIVGNIVVF). Residues 73–94 (RNHRTRTKREDGYKITDLTLPT) are Extracellular-facing. The helical transmembrane segment at 95–115 (VLLLLSWSNFVVVVLILSTAI) threads the bilayer. The Cytoplasmic portion of the chain corresponds to 116–137 (SMSRAQAYGEGWLDEDCYLVKD). The chain crosses the membrane as a helical span at residues 138-158 (GVFAASGCLAILGLGALTISA). The Extracellular segment spans residues 159 to 217 (TRIKVKKQQQLVQVVIKDQNQDQRRSMEEEQKHDEHQTNKSESVIHLVEEVSSTNISRI). N-linked (GlcNAc...) asparagine glycans are attached at residues asparagine 197 and asparagine 213.

This sequence belongs to the DESIGUAL family.

The protein localises to the cell membrane. Its function is as follows. Together with MWL1, contributes to secondary cell wall biology, specifically lignin biosynthesis. The sequence is that of Protein MODIFYING WALL LIGNIN-2 from Arabidopsis thaliana (Mouse-ear cress).